Here is a 433-residue protein sequence, read N- to C-terminus: Enolase (433 aa).

Residue glutamine 167 coordinates (2R)-2-phosphoglycerate. Glutamate 209 serves as the catalytic Proton donor. Positions 246, 291, and 318 each coordinate Mg(2+). (2R)-2-phosphoglycerate is bound by residues lysine 343, arginine 372, serine 373, and lysine 394. The active-site Proton acceptor is the lysine 343.

This sequence belongs to the enolase family. Component of the RNA degradosome, a multiprotein complex involved in RNA processing and mRNA degradation. Mg(2+) is required as a cofactor.

The protein localises to the cytoplasm. It is found in the secreted. Its subcellular location is the cell surface. The enzyme catalyses (2R)-2-phosphoglycerate = phosphoenolpyruvate + H2O. It functions in the pathway carbohydrate degradation; glycolysis; pyruvate from D-glyceraldehyde 3-phosphate: step 4/5. Functionally, catalyzes the reversible conversion of 2-phosphoglycerate (2-PG) into phosphoenolpyruvate (PEP). It is essential for the degradation of carbohydrates via glycolysis. This is Enolase from Shewanella frigidimarina (strain NCIMB 400).